The following is a 262-amino-acid chain: tRNA pseudouridine synthase A (262 aa).

D54 serves as the catalytic Nucleophile. Y113 provides a ligand contact to substrate.

Belongs to the tRNA pseudouridine synthase TruA family. Homodimer.

It carries out the reaction uridine(38/39/40) in tRNA = pseudouridine(38/39/40) in tRNA. In terms of biological role, formation of pseudouridine at positions 38, 39 and 40 in the anticodon stem and loop of transfer RNAs. This chain is tRNA pseudouridine synthase A, found in Lactobacillus delbrueckii subsp. bulgaricus (strain ATCC BAA-365 / Lb-18).